A 118-amino-acid polypeptide reads, in one-letter code: Ribonuclease P protein component (118 aa).

It belongs to the RnpA family. In terms of assembly, consists of a catalytic RNA component (M1 or rnpB) and a protein subunit.

It catalyses the reaction Endonucleolytic cleavage of RNA, removing 5'-extranucleotides from tRNA precursor.. Functionally, RNaseP catalyzes the removal of the 5'-leader sequence from pre-tRNA to produce the mature 5'-terminus. It can also cleave other RNA substrates such as 4.5S RNA. The protein component plays an auxiliary but essential role in vivo by binding to the 5'-leader sequence and broadening the substrate specificity of the ribozyme. In Rickettsia peacockii (strain Rustic), this protein is Ribonuclease P protein component.